We begin with the raw amino-acid sequence, 419 residues long: Tyrosine--tRNA ligase (419 aa).

Residue tyrosine 34 participates in L-tyrosine binding. The 'HIGH' region motif lies at 39-48; the sequence is PSGDSMHIGH. Tyrosine 168 and glutamine 172 together coordinate L-tyrosine. A 'KMSKS' region motif is present at residues 230–234; sequence KFGKS. Lysine 233 is an ATP binding site. Residues 352–418 enclose the S4 RNA-binding domain; sequence VNLVDWLVSL…GKKKYFLVSY (67 aa).

This sequence belongs to the class-I aminoacyl-tRNA synthetase family. TyrS type 1 subfamily. As to quaternary structure, homodimer.

It localises to the cytoplasm. It catalyses the reaction tRNA(Tyr) + L-tyrosine + ATP = L-tyrosyl-tRNA(Tyr) + AMP + diphosphate + H(+). In terms of biological role, catalyzes the attachment of tyrosine to tRNA(Tyr) in a two-step reaction: tyrosine is first activated by ATP to form Tyr-AMP and then transferred to the acceptor end of tRNA(Tyr). This is Tyrosine--tRNA ligase from Listeria welshimeri serovar 6b (strain ATCC 35897 / DSM 20650 / CCUG 15529 / CIP 8149 / NCTC 11857 / SLCC 5334 / V8).